Reading from the N-terminus, the 664-residue chain is Fructose-1,6-bisphosphatase class 3 (664 aa).

Belongs to the FBPase class 3 family. Requires Mn(2+) as cofactor.

It carries out the reaction beta-D-fructose 1,6-bisphosphate + H2O = beta-D-fructose 6-phosphate + phosphate. It functions in the pathway carbohydrate biosynthesis; gluconeogenesis. This chain is Fructose-1,6-bisphosphatase class 3, found in Bacteroides fragilis (strain YCH46).